The primary structure comprises 246 residues: Type III pantothenate kinase (246 aa).

11-18 (DIGNSFIK) serves as a coordination point for ATP. Substrate is bound by residues Y95 and 102–105 (GVDR). D104 serves as the catalytic Proton acceptor. Residue D125 participates in K(+) binding. Residue T128 participates in ATP binding. T179 contributes to the substrate binding site.

It belongs to the type III pantothenate kinase family. In terms of assembly, homodimer. NH4(+) serves as cofactor. The cofactor is K(+).

It is found in the cytoplasm. The enzyme catalyses (R)-pantothenate + ATP = (R)-4'-phosphopantothenate + ADP + H(+). The protein operates within cofactor biosynthesis; coenzyme A biosynthesis; CoA from (R)-pantothenate: step 1/5. In terms of biological role, catalyzes the phosphorylation of pantothenate (Pan), the first step in CoA biosynthesis. This Pseudoalteromonas atlantica (strain T6c / ATCC BAA-1087) protein is Type III pantothenate kinase.